We begin with the raw amino-acid sequence, 446 residues long: tRNA modification GTPase MnmE (446 aa).

Residues R24, E81, and K120 each contribute to the (6S)-5-formyl-5,6,7,8-tetrahydrofolate site. In terms of domain architecture, TrmE-type G spans 216–368 (GLHAVLIGPP…LHIRLRELAL (153 aa)). Residue N226 participates in K(+) binding. Residues 226–231 (NAGKSS), 245–251 (TDVAGTT), and 270–273 (DTAG) contribute to the GTP site. S230 contacts Mg(2+). Residues T245, V247, and T250 each contribute to the K(+) site. T251 contributes to the Mg(2+) binding site. K446 contributes to the (6S)-5-formyl-5,6,7,8-tetrahydrofolate binding site.

The protein belongs to the TRAFAC class TrmE-Era-EngA-EngB-Septin-like GTPase superfamily. TrmE GTPase family. In terms of assembly, homodimer. Heterotetramer of two MnmE and two MnmG subunits. The cofactor is K(+).

It localises to the cytoplasm. Exhibits a very high intrinsic GTPase hydrolysis rate. Involved in the addition of a carboxymethylaminomethyl (cmnm) group at the wobble position (U34) of certain tRNAs, forming tRNA-cmnm(5)s(2)U34. The protein is tRNA modification GTPase MnmE of Xanthomonas oryzae pv. oryzae (strain KACC10331 / KXO85).